The primary structure comprises 1401 residues: Lysine-specific demethylase 6A (1401 aa).

Positions 1–1095 are interaction with SUPT6H; that stretch reads MKSCGVSLAT…TNIDLSDDKK (1095 aa). 8 TPR repeats span residues 93–126, 130–163, 170–199, 205–238, 250–283, 284–317, 318–351, and 352–385; these read SDFFCQLGHFNLLLEDYPKALSAYQRYYSLQSDY, AAFLYGLGLVYFHYNAFQWAIKAFQEVLYVDPSF, HLRLGLMFKVNTDYESSLKHFQLALVDCNP, AEIQFHIAHLYETQRKYHSAKEAYEQLLQTENLS, GWMHHTVDLLGDKATKESYAIQYLQKSLEADPNS, GQSWYFLGRCYSSIGKVQDAFISYRQSIDKSEAS, ADTWCSIGVLYQQQNQPMDALQAYICAVQLDHGH, and AAAWMDLGTLYESCNQPQDAIKCYLNATRSKSCS. Over residues 437 to 449 the composition is skewed to polar residues; it reads AMNTAQQNTSDNW. Positions 437 to 457 are disordered; sequence AMNTAQQNTSDNWSGGHAVSH. Position 519 is an omega-N-methylarginine (Arg519). A disordered region spans residues 521–541; that stretch reads TGIPNGPTADSSLPTNSVSGQ. At Arg549 the chain carries Omega-N-methylarginine. Polar residues-rich tracts occupy residues 624–652 and 660–724; these read LTSSAEEPWKNQLSNSTQGLHKGQSSHSA and LSST…SGNI. 5 disordered regions span residues 624–746, 758–778, 810–864, 914–940, and 1043–1079; these read LTSS…SVEG, AVCSPSHGDSKSPGLLSSDNP, KTDN…ESQS, LLDKCPPPRPPSSPYPPLPKDKLNPPT, and FQESLREENEKRSHHKDHSDSESTSSDNSGRRRKGPF. At Ser769 the chain carries Phosphoserine. Low complexity predominate over residues 814-833; that stretch reads SVASSPSSAISTATPSPKST. Thr827 bears the Phosphothreonine mark. The residue at position 829 (Ser829) is a Phosphoserine. A compositionally biased stretch (polar residues) spans 834 to 848; the sequence is EQTTTNSVTSLNSPH. The segment covering 918–931 has biased composition (pro residues); sequence CPPPRPPSSPYPPL. Residues 1046–1063 are compositionally biased toward basic and acidic residues; the sequence is SLREENEKRSHHKDHSDS. The JmjC domain occupies 1095–1258; that stretch reads KWKLQLHELT…YKLAVERYEW (164 aa). Positions 1146, 1148, and 1226 each coordinate Fe cation. Zn(2+) contacts are provided by Cys1331, Cys1334, Cys1358, and Cys1361.

This sequence belongs to the UTX family. In terms of assembly, interacts with TLE1. Component of the MLL2/3 complex (also named ASCOM complex), at least composed of KMT2D/MLL2 or KMT2C/MLL3, ASH2L, RBBP5, WDR5, NCOA6, DPY30, KDM6A (or KDM6B), PAXIP1/PTIP, PAGR1 and alpha- and beta-tubulin. Interacts with SUPT6H. Interacts with SMARCA4. Interacts with PROSER1. The cofactor is L-ascorbate. It depends on Fe(2+) as a cofactor.

It is found in the nucleus. The catalysed reaction is N(6),N(6),N(6)-trimethyl-L-lysyl(27)-[histone H3] + 2 2-oxoglutarate + 2 O2 = N(6)-methyl-L-lysyl(27)-[histone H3] + 2 formaldehyde + 2 succinate + 2 CO2. Functionally, histone demethylase that specifically demethylates 'Lys-27' of histone H3, thereby playing a central role in histone code. Demethylates trimethylated and dimethylated but not monomethylated H3 'Lys-27'. Plays a central role in regulation of posterior development, by regulating HOX gene expression. Demethylation of 'Lys-27' of histone H3 is concomitant with methylation of 'Lys-4' of histone H3, and regulates the recruitment of the PRC1 complex and monoubiquitination of histone H2A. Plays a demethylase-independent role in chromatin remodeling to regulate T-box family member-dependent gene expression. The protein is Lysine-specific demethylase 6A (KDM6A) of Homo sapiens (Human).